We begin with the raw amino-acid sequence, 1222 residues long: Chitin synthase 4 (1222 aa).

Disordered stretches follow at residues 1–101 (MSLP…ERNR) and 138–200 (TERT…KRIE). 2 stretches are compositionally biased toward polar residues: residues 11 to 24 (QAYN…NSPS) and 42 to 77 (NQAS…SPDG). The segment covering 182 to 196 (SGKIKRKSRRHSKPP) has biased composition (basic residues). Transmembrane regions (helical) follow at residues 205–225 (PPTF…GFIM) and 243–263 (MGLI…TFGF). N-linked (GlcNAc...) asparagine glycans are attached at residues Asn-378, Asn-418, and Asn-440. Residues 513–533 (ALILSVVGVRFFLAIIFQWFI) traverse the membrane as a helical segment. A disordered region spans residues 576–630 (TVYGSSDRSSKRASFLPTTSRFSSVGGPDIRSQGGRRMPTTMASQSTSNQLLTPN). Residues 616 to 630 (TMASQSTSNQLLTPN) are compositionally biased toward polar residues. N-linked (GlcNAc...) asparagine glycosylation is found at Asn-637 and Asn-1030. Transmembrane regions (helical) follow at residues 1055-1075 (FIIF…AFTF), 1089-1109 (IIPL…VIIT), and 1113-1133 (WSYI…NFVL). The tract at residues 1202–1222 (GGQTWTSPPGHQYNEEYYSDA) is disordered.

This sequence belongs to the chitin synthase family. Class IV subfamily.

It is found in the cell membrane. The enzyme catalyses [(1-&gt;4)-N-acetyl-beta-D-glucosaminyl](n) + UDP-N-acetyl-alpha-D-glucosamine = [(1-&gt;4)-N-acetyl-beta-D-glucosaminyl](n+1) + UDP + H(+). Polymerizes chitin, a structural polymer of the cell wall and septum, by transferring the sugar moiety of UDP-GlcNAc to the non-reducing end of the growing chitin polymer. Shows additive effects in septum formation with CHS1, CHS2, CHS3A, CHS5, CHS6 and CHS7. Regulates conidiation. Involved in virulence and mediates mycotoxin deoxinivalenol (DON) biosynthesis via the regulation of the expression of TRI4, TRI5 and TRI6. This chain is Chitin synthase 4, found in Gibberella zeae (strain ATCC MYA-4620 / CBS 123657 / FGSC 9075 / NRRL 31084 / PH-1) (Wheat head blight fungus).